The chain runs to 331 residues: Pantothenate kinase (331 aa).

109–116 (GSVAVGKS) is an ATP binding site.

The protein belongs to the prokaryotic pantothenate kinase family.

Its subcellular location is the cytoplasm. The catalysed reaction is (R)-pantothenate + ATP = (R)-4'-phosphopantothenate + ADP + H(+). Its pathway is cofactor biosynthesis; coenzyme A biosynthesis; CoA from (R)-pantothenate: step 1/5. The chain is Pantothenate kinase from Rhizobium rhizogenes (strain K84 / ATCC BAA-868) (Agrobacterium radiobacter).